The chain runs to 492 residues: uncharacterized protein (492 aa).

12 helical membrane passes run 13 to 33 (LGFI…WRFG), 42 to 62 (GAFL…LMIL), 97 to 117 (FIIT…LIIL), 150 to 170 (GILV…SAGI), 180 to 200 (IMIP…LTLP), 222 to 242 (VWLS…GILI), 258 to 278 (AVTV…AVFG), 320 to 340 (FGIV…VSIV), 359 to 379 (LLAV…GAGL), 391 to 411 (GYLL…LFGG), 428 to 448 (VWWK…VVFL), and 463 to 483 (TTYV…SVIL).

It belongs to the sodium:neurotransmitter symporter (SNF) (TC 2.A.22) family.

It localises to the cell membrane. Putative sodium-dependent transporter. This is an uncharacterized protein from Methanocaldococcus jannaschii (strain ATCC 43067 / DSM 2661 / JAL-1 / JCM 10045 / NBRC 100440) (Methanococcus jannaschii).